The following is a 367-amino-acid chain: Chorismate synthase (367 aa).

Residues 39-60 are disordered; the sequence is EEFSHDLQRRASGKSRHTSARR. NADP(+) contacts are provided by arginine 48 and arginine 54. FMN contacts are provided by residues 125 to 127, 238 to 239, glycine 278, 293 to 297, and arginine 319; these read RSS, NA, and KPTSS.

The protein belongs to the chorismate synthase family. In terms of assembly, homotetramer. FMNH2 serves as cofactor.

The enzyme catalyses 5-O-(1-carboxyvinyl)-3-phosphoshikimate = chorismate + phosphate. The protein operates within metabolic intermediate biosynthesis; chorismate biosynthesis; chorismate from D-erythrose 4-phosphate and phosphoenolpyruvate: step 7/7. Functionally, catalyzes the anti-1,4-elimination of the C-3 phosphate and the C-6 proR hydrogen from 5-enolpyruvylshikimate-3-phosphate (EPSP) to yield chorismate, which is the branch point compound that serves as the starting substrate for the three terminal pathways of aromatic amino acid biosynthesis. This reaction introduces a second double bond into the aromatic ring system. The sequence is that of Chorismate synthase from Xanthomonas oryzae pv. oryzae (strain MAFF 311018).